Consider the following 680-residue polypeptide: UvrABC system protein C (680 aa).

One can recognise a GIY-YIG domain in the interval 66 to 144 (NSPGVYRMFN…IKRLRPRFNV (79 aa)). The UVR domain occupies 254–289 (QKVKSHMAEAMNQAAEDLDFERAAIYRDRLAALSHV).

The protein belongs to the UvrC family. As to quaternary structure, interacts with UvrB in an incision complex.

It is found in the cytoplasm. Its function is as follows. The UvrABC repair system catalyzes the recognition and processing of DNA lesions. UvrC both incises the 5' and 3' sides of the lesion. The N-terminal half is responsible for the 3' incision and the C-terminal half is responsible for the 5' incision. The protein is UvrABC system protein C of Rhizobium johnstonii (strain DSM 114642 / LMG 32736 / 3841) (Rhizobium leguminosarum bv. viciae).